Consider the following 1142-residue polypeptide: Protein kinase C-like (1142 aa).

The REM-1 1 domain maps to 1 to 67; it reads MNDEDKVHDI…LRELQMRRLG (67 aa). The tract at residues 70–139 is disordered; it reads VDNMSLGASP…PPDSNVPRAR (70 aa). Residues 149–226 form the REM-1 2 domain; sequence KFDTPHLGPR…LKRYEELHID (78 aa). The region spanning 231-349 is the C2 domain; it reads GPDDDSINLP…LRRKKIEAEM (119 aa). Residues 357 to 403 are disordered; it reads ADRVGSRAPPPQFPMGAQSPQFAAPPTSPGSQEQNTMIPPQAPPPSQ. Over residues 385 to 394 the composition is skewed to polar residues; that stretch reads PGSQEQNTMI. 2 Phorbol-ester/DAG-type zinc fingers span residues 457–505 and 525–576; these read GHKF…VTKC and PHRF…PDFC. Disordered regions lie at residues 592–622 and 651–807; these read TQKK…SGSI and SQTT…TDPG. Over residues 613-622 the composition is skewed to polar residues; the sequence is SKTSISSGSI. Low complexity-rich tracts occupy residues 663-677, 712-724, and 741-765; these read TSTS…AAAA, SAQQ…SPQQ, and PQAR…MYQQ. In terms of domain architecture, Protein kinase spans 817-1076; it reads FNFLAVLGKG…AQEIMSQPFF (260 aa). ATP-binding positions include 823-831 and Lys-846; that span reads LGKGNFGKV. Asp-942 acts as the Proton acceptor in catalysis. The region spanning 1077 to 1142 is the AGC-kinase C-terminal domain; sequence RNINWDDIYH…RGFSYTADFE (66 aa).

This sequence belongs to the protein kinase superfamily. AGC Ser/Thr protein kinase family. PKC subfamily.

The enzyme catalyses L-seryl-[protein] + ATP = O-phospho-L-seryl-[protein] + ADP + H(+). The catalysed reaction is L-threonyl-[protein] + ATP = O-phospho-L-threonyl-[protein] + ADP + H(+). The polypeptide is Protein kinase C-like (Neurospora crassa (strain ATCC 24698 / 74-OR23-1A / CBS 708.71 / DSM 1257 / FGSC 987)).